Consider the following 277-residue polypeptide: DNA polymerase epsilon subunit C (277 aa).

2 stretches are compositionally biased toward polar residues: residues 1–16 and 24–39; these read MSSP…SQVA and ETPS…TNTP. The segment at 1-91 is disordered; that stretch reads MSSPMPQSSL…EEEEEEESLS (91 aa). A compositionally biased stretch (acidic residues) spans 69-89; sequence ENEDDDEQEEEEEEEEEEEES.

In terms of assembly, heterotetramer. Consists of four subunits: POL2, DPB2, DPB3 and DPB4.

It is found in the nucleus. As accessory component of the DNA polymerase epsilon (DNA polymerase II) participates in chromosomal DNA replication. This is DNA polymerase epsilon subunit C (DPB3) from Debaryomyces hansenii (strain ATCC 36239 / CBS 767 / BCRC 21394 / JCM 1990 / NBRC 0083 / IGC 2968) (Yeast).